The primary structure comprises 286 residues: uncharacterized protein (286 aa).

A Radical SAM core domain is found at 36 to 256; that stretch reads ENPQHHPSIE…IKGCLLVQLK (221 aa). Residues cysteine 50, cysteine 54, and cysteine 57 each contribute to the [4Fe-4S] cluster site.

[4Fe-4S] cluster serves as cofactor.

This is an uncharacterized protein from Methanocaldococcus jannaschii (strain ATCC 43067 / DSM 2661 / JAL-1 / JCM 10045 / NBRC 100440) (Methanococcus jannaschii).